The primary structure comprises 553 residues: Putative transport protein YidE (553 aa).

Transmembrane regions (helical) follow at residues 4–24, 28–48, 65–85, 95–115, and 158–178; these read IALTVSVLALVAVVGLWIGNI, GVGFGIGGVLFGGIIVGHFVD, FGLILFVYTIGIQVGPGFFAS, LFAVLIVIMGGLVTAILHKIF, and MSYAMAYPFGICGILLTMWLM. RCK C-terminal domains follow at residues 192–276 and 279–361; these read KHES…VIGK and DTSL…VVGN. The next 6 helical transmembrane spans lie at 371-391, 393-413, 437-457, 464-484, 493-513, and 533-553; these read MLPVFIGIGLGVLLGSIPLFV, GFPVALKLGLAGGPLIMALIL, LGIVLFLAVVGLKSGGDFVDT, LSWIGYGIFITAIPLITVGLL, YLTLCGMLAGSMTDPPALAFA, and LVMFLRIITPQLLAVIFWGMG.

This sequence belongs to the AAE transporter (TC 2.A.81) family. YidE subfamily.

The protein localises to the cell membrane. This chain is Putative transport protein YidE, found in Salmonella heidelberg (strain SL476).